Reading from the N-terminus, the 274-residue chain is Oxidoreductase stcQ (274 aa).

It belongs to the avfA family.

Its pathway is mycotoxin biosynthesis; sterigmatocystin biosynthesis. Functionally, oxidoreductase; part of the gene cluster that mediates the biosynthesis of sterigmatocystin (ST), a polyketide-derived furanocoumarin which is part of the most toxic and carcinogenic compounds among the known mycotoxins. The first step in the biosynthesis of sterigmatocystin is the production of hexanoate by the fatty acid synthase (FAS) units stcJ and stcK. The polyketide backbone is assembled by the non-reducing polyketide synthase stcA by condensation of the starter hexanoyl-CoA and 7 malonyl-CoA extender units followed by cyclization and release of norsolorinic acid. Norsolorinic acid is the first stable intermediate in the biosynthesis of sterigmatocystin and is converted into averantin (AVN) by the ketoreductase stcE which reduces the hexanoate ketone to an alcohol. Averantin is then oxidized into 5'-hydroxyaverantin (HAVN) by the cytochrome P450 monooxygenase stcF. 5'-hydroxyaverantin is further converted to 5'-oxyaverantin (OAVN) by the 5'-hydroxyaverantin dehydrogenase stcG. The next step is the conversion of OAVN into averufin (AVF) which is catalyzed by a yet to be identified enzyme. The cytochrome P450 monooxygenase stcB and the flavin-binding monooxygenase stcW are both required for the conversion of averufin to 1-hydroxyversicolorone. The esterase stcI probably catalyzes the formation of versiconal hemiacetal acetate from 1-hydroxyversicolorone. The oxydoreductase stcN then probably catalyzes the biosynthetic step from versiconal to versicolorin B (VERB). The next step is performed by the versicolorin B desaturase stcL to produce versicolorin A (VERA). The ketoreductase stcU and the cytochrome P450 monooxygenase stcS are involved in the conversion of versicolorin A to demethylsterigmatocystin. The Baeyer-Villiger oxidas stcQ and the reductase stcR might be involved in the biosynthetic step from versicolorin A to demethylsterigmatocystin. The final step in the biosynthesis of sterigmatocystin is the methylation of demethylsterigmatocystin catalyzed by the methyltransferase stcP. This is Oxidoreductase stcQ from Emericella nidulans (strain FGSC A4 / ATCC 38163 / CBS 112.46 / NRRL 194 / M139) (Aspergillus nidulans).